The chain runs to 207 residues: MIDSLHGEVLHVGLNYVVIECSGVGYRATASPSLLGTLRKGEDARILVTMNVRDDGIDLYAFESDEARQMFAMLRKVSGVGPTSAMAICSIFKPDEFARIITDEDDAELRNVKGIGKRTAERIIVDLKSKVAVFDSGDSASEPQSGVGGNSEAEVDSGVVGTVTQALVELGFPEKQAEKTATSAAAEGGSVSEILKRALRSMSSERN.

Positions 1 to 63 (MIDSLHGEVL…DDGIDLYAFE (63 aa)) are domain I. The tract at residues 64 to 142 (SDEARQMFAM…VFDSGDSASE (79 aa)) is domain II. The flexible linker stretch occupies residues 143 to 154 (PQSGVGGNSEAE). Positions 155–207 (VDSGVVGTVTQALVELGFPEKQAEKTATSAAAEGGSVSEILKRALRSMSSERN) are domain III.

The protein belongs to the RuvA family. As to quaternary structure, homotetramer. Forms an RuvA(8)-RuvB(12)-Holliday junction (HJ) complex. HJ DNA is sandwiched between 2 RuvA tetramers; dsDNA enters through RuvA and exits via RuvB. An RuvB hexamer assembles on each DNA strand where it exits the tetramer. Each RuvB hexamer is contacted by two RuvA subunits (via domain III) on 2 adjacent RuvB subunits; this complex drives branch migration. In the full resolvosome a probable DNA-RuvA(4)-RuvB(12)-RuvC(2) complex forms which resolves the HJ.

The protein localises to the cytoplasm. Its function is as follows. The RuvA-RuvB-RuvC complex processes Holliday junction (HJ) DNA during genetic recombination and DNA repair, while the RuvA-RuvB complex plays an important role in the rescue of blocked DNA replication forks via replication fork reversal (RFR). RuvA specifically binds to HJ cruciform DNA, conferring on it an open structure. The RuvB hexamer acts as an ATP-dependent pump, pulling dsDNA into and through the RuvAB complex. HJ branch migration allows RuvC to scan DNA until it finds its consensus sequence, where it cleaves and resolves the cruciform DNA. This is Holliday junction branch migration complex subunit RuvA from Corynebacterium kroppenstedtii (strain DSM 44385 / JCM 11950 / CIP 105744 / CCUG 35717).